We begin with the raw amino-acid sequence, 143 residues long: Mediator of RNA polymerase II transcription subunit 9 (143 aa).

Positions 84 to 141 (QDCNHKIFELQKRFESAREQIRQLPGIDYNKDEQLQRLELLRNQFKLKQQLIRKYKDT) form a coiled coil.

The protein belongs to the Mediator complex subunit 9 family. As to quaternary structure, component of the Mediator complex.

It is found in the nucleus. Functionally, component of the Mediator complex, a coactivator involved in the regulated transcription of nearly all RNA polymerase II-dependent genes. Mediator functions as a bridge to convey information from gene-specific regulatory proteins to the basal RNA polymerase II transcription machinery. Mediator is recruited to promoters by direct interactions with regulatory proteins and serves as a scaffold for the assembly of a functional preinitiation complex with RNA polymerase II and the general transcription factors. The chain is Mediator of RNA polymerase II transcription subunit 9 (MED9) from Drosophila pseudoobscura pseudoobscura (Fruit fly).